Reading from the N-terminus, the 72-residue chain is MNNSMISPSVVDLLEKIHDRYSLVILTSKRARQIIEGAEPQISIKSNKPLTIAINEVDQDAVEFEILEEGLK.

The protein belongs to the RNA polymerase subunit omega family. In terms of assembly, the RNAP catalytic core consists of 2 alpha, 1 beta, 1 beta' and 1 omega subunit. When a sigma factor is associated with the core the holoenzyme is formed, which can initiate transcription.

The catalysed reaction is RNA(n) + a ribonucleoside 5'-triphosphate = RNA(n+1) + diphosphate. Functionally, promotes RNA polymerase assembly. Latches the N- and C-terminal regions of the beta' subunit thereby facilitating its interaction with the beta and alpha subunits. This is DNA-directed RNA polymerase subunit omega from Clostridium beijerinckii (strain ATCC 51743 / NCIMB 8052) (Clostridium acetobutylicum).